The sequence spans 307 residues: Oligopeptide transport ATP-binding protein OppF (307 aa).

The ABC transporter domain maps to 6–251; it reads VEVKDLEISF…PIHPYTQSLL (246 aa). ATP is bound at residue 42–49; sequence GESGSGKT.

This sequence belongs to the ABC transporter superfamily. As to quaternary structure, the complex is composed of two ATP-binding proteins (OppD and OppF), two transmembrane proteins (OppB and OppC) and a solute-binding protein (OppA).

The protein localises to the cell membrane. It catalyses the reaction a [peptide](out) + ATP + H2O = a [peptide](in) + ADP + phosphate + H(+). In terms of biological role, part of the ABC transporter complex OppABCDF involved in the uptake of oligopeptides. Probably responsible for energy coupling to the transport system. In Streptococcus pyogenes serotype M1, this protein is Oligopeptide transport ATP-binding protein OppF (oppF).